The primary structure comprises 804 residues: Leucine--tRNA ligase (804 aa).

The 'HIGH' region signature appears at 39-50 (PYPSGAGLHVGH). The short motif at 580–584 (KMSKS) is the 'KMSKS' region element. ATP is bound at residue lysine 583.

This sequence belongs to the class-I aminoacyl-tRNA synthetase family.

The protein resides in the cytoplasm. The catalysed reaction is tRNA(Leu) + L-leucine + ATP = L-leucyl-tRNA(Leu) + AMP + diphosphate. This Mycoplasma capricolum subsp. capricolum (strain California kid / ATCC 27343 / NCTC 10154) protein is Leucine--tRNA ligase.